Reading from the N-terminus, the 408-residue chain is PTI1-like tyrosine-protein kinase 3 (408 aa).

Over residues 59 to 76 (SSENEHLRSPKHHNDFGH) the composition is skewed to basic and acidic residues. Residues 59–91 (SSENEHLRSPKHHNDFGHHTRKPQAAVKPDALK) are disordered. In terms of domain architecture, Protein kinase spans 113 to 395 (FGSKSLIGEG…IVVKALQPLL (283 aa)). ATP is bound by residues 119–127 (IGEGSYGRA) and K141. Residue D245 is the Proton acceptor of the active site.

Belongs to the protein kinase superfamily. Tyr protein kinase family. In terms of assembly, interacts with OXI1. Phosphorylated by OXI1.

It localises to the cell membrane. It catalyses the reaction L-tyrosyl-[protein] + ATP = O-phospho-L-tyrosyl-[protein] + ADP + H(+). The sequence is that of PTI1-like tyrosine-protein kinase 3 (PTI13) from Arabidopsis thaliana (Mouse-ear cress).